The chain runs to 332 residues: Fructose-1,6-bisphosphatase class 1 (332 aa).

Mg(2+)-binding residues include glutamate 89, aspartate 110, leucine 112, and aspartate 113. Substrate contacts are provided by residues 113 to 116 (DGSS), asparagine 206, tyrosine 239, 257 to 259 (YLY), and lysine 269. Mg(2+) is bound at residue glutamate 275.

The protein belongs to the FBPase class 1 family. As to quaternary structure, homotetramer. The cofactor is Mg(2+).

Its subcellular location is the cytoplasm. It carries out the reaction beta-D-fructose 1,6-bisphosphate + H2O = beta-D-fructose 6-phosphate + phosphate. Its pathway is carbohydrate biosynthesis; gluconeogenesis. The chain is Fructose-1,6-bisphosphatase class 1 from Klebsiella pneumoniae subsp. pneumoniae (strain ATCC 700721 / MGH 78578).